A 115-amino-acid polypeptide reads, in one-letter code: T cell receptor beta variable 7-7 (115 aa).

Positions 1-21 are cleaved as a signal peptide; sequence MGTSLLCWVVLGFLGTDHTGA. In terms of domain architecture, Ig-like spans 22–115; it reads GVSQSPRYKV…SAMYRCASSL (94 aa). Cysteine 42 and cysteine 111 are oxidised to a cystine.

In terms of assembly, alpha-beta TR is a heterodimer composed of an alpha and beta chain; disulfide-linked. The alpha-beta TR is associated with the transmembrane signaling CD3 coreceptor proteins to form the TR-CD3 (TcR or TCR). The assembly of alpha-beta TR heterodimers with CD3 occurs in the endoplasmic reticulum where a single alpha-beta TR heterodimer associates with one CD3D-CD3E heterodimer, one CD3G-CD3E heterodimer and one CD247 homodimer forming a stable octameric structure. CD3D-CD3E and CD3G-CD3E heterodimers preferentially associate with TR alpha and TR beta chains, respectively. The association of the CD247 homodimer is the last step of TcR assembly in the endoplasmic reticulum and is required for transport to the cell surface.

The protein localises to the cell membrane. In terms of biological role, v region of the variable domain of T cell receptor (TR) beta chain that participates in the antigen recognition. Alpha-beta T cell receptors are antigen specific receptors which are essential to the immune response and are present on the cell surface of T lymphocytes. Recognize peptide-major histocompatibility (MH) (pMH) complexes that are displayed by antigen presenting cells (APC), a prerequisite for efficient T cell adaptive immunity against pathogens. Binding of alpha-beta TR to pMH complex initiates TR-CD3 clustering on the cell surface and intracellular activation of LCK that phosphorylates the ITAM motifs of CD3G, CD3D, CD3E and CD247 enabling the recruitment of ZAP70. In turn ZAP70 phosphorylates LAT, which recruits numerous signaling molecules to form the LAT signalosome. The LAT signalosome propagates signal branching to three major signaling pathways, the calcium, the mitogen-activated protein kinase (MAPK) kinase and the nuclear factor NF-kappa-B (NF-kB) pathways, leading to the mobilization of transcription factors that are critical for gene expression and essential for T cell growth and differentiation. The T cell repertoire is generated in the thymus, by V-(D)-J rearrangement. This repertoire is then shaped by intrathymic selection events to generate a peripheral T cell pool of self-MH restricted, non-autoaggressive T cells. Post-thymic interaction of alpha-beta TR with the pMH complexes shapes TR structural and functional avidity. The polypeptide is T cell receptor beta variable 7-7 (Homo sapiens (Human)).